The primary structure comprises 249 residues: Small ribosomal subunit protein uS3 (249 aa).

The 69-residue stretch at 38 to 106 (IRDFLSKGLE…QVQLNILEVK (69 aa)) folds into the KH type-2 domain. Positions 218–233 (ARDDRGSRRGRNDRPR) are enriched in basic and acidic residues. Residues 218–249 (ARDDRGSRRGRNDRPRRGGGRRRRAAEQKQEG) form a disordered region.

This sequence belongs to the universal ribosomal protein uS3 family. As to quaternary structure, part of the 30S ribosomal subunit. Forms a tight complex with proteins S10 and S14.

Functionally, binds the lower part of the 30S subunit head. Binds mRNA in the 70S ribosome, positioning it for translation. The protein is Small ribosomal subunit protein uS3 of Corynebacterium kroppenstedtii (strain DSM 44385 / JCM 11950 / CIP 105744 / CCUG 35717).